A 245-amino-acid chain; its full sequence is 8-amino-3,8-dideoxy-manno-octulosonate cytidylyltransferase (245 aa).

This sequence belongs to the KdsB family.

The protein localises to the cytoplasm. The enzyme catalyses 8-amino-3,8-dideoxy-alpha-D-manno-octulosonate + CTP = CMP-8-amino-3,8-dideoxy-alpha-D-manno-oct-2-ulosonate + diphosphate. The protein operates within bacterial outer membrane biogenesis; lipopolysaccharide biosynthesis. Functionally, activates KDO8N (a required 8-carbon sugar) for incorporation into bacterial lipopolysaccharide in the Shewanella genus. In Shewanella sp. (strain W3-18-1), this protein is 8-amino-3,8-dideoxy-manno-octulosonate cytidylyltransferase.